A 76-amino-acid chain; its full sequence is MAEKKLTFEENLAQLEVIVNELETGDVPLEKAMTAFQEGVKLSQTLEETLSQAEKTMAKVMADNGEEVPLDAEEQQ.

This sequence belongs to the XseB family. As to quaternary structure, heterooligomer composed of large and small subunits.

The protein resides in the cytoplasm. The catalysed reaction is Exonucleolytic cleavage in either 5'- to 3'- or 3'- to 5'-direction to yield nucleoside 5'-phosphates.. Bidirectionally degrades single-stranded DNA into large acid-insoluble oligonucleotides, which are then degraded further into small acid-soluble oligonucleotides. This Latilactobacillus sakei subsp. sakei (strain 23K) (Lactobacillus sakei subsp. sakei) protein is Exodeoxyribonuclease 7 small subunit.